The following is a 439-amino-acid chain: sn-glycerol-3-phosphate-binding periplasmic protein UgpB (439 aa).

Residues 1–25 (MFNNSIHKVSICIALTLTFSANAMA) form the signal peptide. Tyrosine 67, glutamate 91, serine 146, serine 272, glycine 309, tyrosine 348, and arginine 399 together coordinate sn-glycerol 3-phosphate.

The protein belongs to the bacterial solute-binding protein 1 family. The complex is composed of two ATP-binding proteins (UgpC), two transmembrane proteins (UgpA and UgpE) and a solute-binding protein (UgpB).

The protein localises to the periplasm. In terms of biological role, part of the ABC transporter complex UgpBAEC involved in sn-glycerol-3-phosphate (G3P) import. Binds G3P. This chain is sn-glycerol-3-phosphate-binding periplasmic protein UgpB (ugpB), found in Yersinia pseudotuberculosis serotype I (strain IP32953).